The chain runs to 123 residues: Small ribosomal subunit protein bS16 (123 aa).

Residues 87–123 (VKNNPVKAKPGKRAQERAAEKAQKVADAAAAAADAAE) are disordered. Positions 99-110 (RAQERAAEKAQK) are enriched in basic and acidic residues. The segment covering 111–123 (VADAAAAAADAAE) has biased composition (low complexity).

The protein belongs to the bacterial ribosomal protein bS16 family.

This chain is Small ribosomal subunit protein bS16, found in Rhizobium johnstonii (strain DSM 114642 / LMG 32736 / 3841) (Rhizobium leguminosarum bv. viciae).